A 295-amino-acid polypeptide reads, in one-letter code: UDP-N-acetylenolpyruvoylglucosamine reductase (295 aa).

The FAD-binding PCMH-type domain occupies 24 to 188; sequence KVGGNAEIFF…LKAVFKVNKG (165 aa). The active site involves R168. S217 functions as the Proton donor in the catalytic mechanism. Residue E287 is part of the active site.

It belongs to the MurB family. FAD is required as a cofactor.

The protein localises to the cytoplasm. The catalysed reaction is UDP-N-acetyl-alpha-D-muramate + NADP(+) = UDP-N-acetyl-3-O-(1-carboxyvinyl)-alpha-D-glucosamine + NADPH + H(+). It functions in the pathway cell wall biogenesis; peptidoglycan biosynthesis. Cell wall formation. In Rickettsia felis (strain ATCC VR-1525 / URRWXCal2) (Rickettsia azadi), this protein is UDP-N-acetylenolpyruvoylglucosamine reductase.